The chain runs to 148 residues: FAD synthase (148 aa).

ATP-binding positions include 14–15, 19–22, and Asp-100; these read VF and HAGH.

The protein belongs to the archaeal FAD synthase family. As to quaternary structure, homodimer. It depends on a divalent metal cation as a cofactor.

The catalysed reaction is FMN + ATP + H(+) = FAD + diphosphate. The protein operates within cofactor biosynthesis; FAD biosynthesis; FAD from FMN: step 1/1. Catalyzes the transfer of the AMP portion of ATP to flavin mononucleotide (FMN) to produce flavin adenine dinucleotide (FAD) coenzyme. This is FAD synthase from Pyrococcus horikoshii (strain ATCC 700860 / DSM 12428 / JCM 9974 / NBRC 100139 / OT-3).